The following is a 509-amino-acid chain: ATP synthase subunit alpha, mitochondrial (509 aa).

Residue 171–178 participates in ATP binding; sequence GDRQTGKT.

It belongs to the ATPase alpha/beta chains family. As to quaternary structure, F-type ATPases have 2 components, CF(1) - the catalytic core - and CF(0) - the membrane proton channel. CF(1) has five subunits: alpha(3), beta(3), gamma(1), delta(1), epsilon(1). CF(0) has three main subunits: a, b and c.

It is found in the mitochondrion. The protein resides in the mitochondrion inner membrane. In terms of biological role, mitochondrial membrane ATP synthase (F(1)F(0) ATP synthase or Complex V) produces ATP from ADP in the presence of a proton gradient across the membrane which is generated by electron transport complexes of the respiratory chain. F-type ATPases consist of two structural domains, F(1) - containing the extramembraneous catalytic core, and F(0) - containing the membrane proton channel, linked together by a central stalk and a peripheral stalk. During catalysis, ATP synthesis in the catalytic domain of F(1) is coupled via a rotary mechanism of the central stalk subunits to proton translocation. Subunits alpha and beta form the catalytic core in F(1). Rotation of the central stalk against the surrounding alpha(3)beta(3) subunits leads to hydrolysis of ATP in three separate catalytic sites on the beta subunits. Subunit alpha does not bear the catalytic high-affinity ATP-binding sites. This chain is ATP synthase subunit alpha, mitochondrial (ATPA), found in Nicotiana plumbaginifolia (Leadwort-leaved tobacco).